Here is a 242-residue protein sequence, read N- to C-terminus: Small ribosomal subunit protein uS2 (242 aa).

It belongs to the universal ribosomal protein uS2 family.

This chain is Small ribosomal subunit protein uS2, found in Shewanella baltica (strain OS223).